Reading from the N-terminus, the 302-residue chain is Putative glycine N-acyltransferase-like protein 1B (302 aa).

The protein belongs to the glycine N-acyltransferase family.

It carries out the reaction an acyl-CoA + L-glutamine = an N(2)-acyl-L-glutamine + CoA + H(+). Functionally, putative acyltransferase which transfers an acyl group to the N-terminus of glutamine. Can use phenylacetyl-CoA as an acyl donor. This chain is Putative glycine N-acyltransferase-like protein 1B, found in Homo sapiens (Human).